The chain runs to 66 residues: Large ribosomal subunit protein bL35 (66 aa).

The span at 1 to 16 shows a compositional bias: basic residues; sequence MPKQKTHRASAKRFKR. The interval 1–20 is disordered; the sequence is MPKQKTHRASAKRFKRTGSG.

The protein belongs to the bacterial ribosomal protein bL35 family.

This Streptococcus uberis (strain ATCC BAA-854 / 0140J) protein is Large ribosomal subunit protein bL35.